The sequence spans 135 residues: uncharacterized protein (135 aa).

4 helical membrane passes run 4 to 24 (IIIC…WIFG), 26 to 46 (WDMP…TGVI), 68 to 88 (LILV…NGAW), and 93 to 113 (LIAY…CAAL).

It belongs to the bacteriophage holin family. Cp-1 holin subfamily.

The protein localises to the cell membrane. This is an uncharacterized protein from Clostridium perfringens (strain 13 / Type A).